The chain runs to 253 residues: 5'/3'-nucleotidase SurE (253 aa).

A divalent metal cation contacts are provided by aspartate 8, aspartate 9, serine 39, and asparagine 92.

Belongs to the SurE nucleotidase family. Requires a divalent metal cation as cofactor.

Its subcellular location is the cytoplasm. It carries out the reaction a ribonucleoside 5'-phosphate + H2O = a ribonucleoside + phosphate. The catalysed reaction is a ribonucleoside 3'-phosphate + H2O = a ribonucleoside + phosphate. It catalyses the reaction [phosphate](n) + H2O = [phosphate](n-1) + phosphate + H(+). In terms of biological role, nucleotidase with a broad substrate specificity as it can dephosphorylate various ribo- and deoxyribonucleoside 5'-monophosphates and ribonucleoside 3'-monophosphates with highest affinity to 3'-AMP. Also hydrolyzes polyphosphate (exopolyphosphatase activity) with the preference for short-chain-length substrates (P20-25). Might be involved in the regulation of dNTP and NTP pools, and in the turnover of 3'-mononucleotides produced by numerous intracellular RNases (T1, T2, and F) during the degradation of various RNAs. The polypeptide is 5'/3'-nucleotidase SurE (Shigella flexneri serotype 5b (strain 8401)).